We begin with the raw amino-acid sequence, 129 residues long: Glycine cleavage system H protein (129 aa).

The Lipoyl-binding domain occupies 24–106; it reads TYTVGITEHA…YAGGWIFKIK (83 aa). N6-lipoyllysine is present on Lys65.

It belongs to the GcvH family. In terms of assembly, the glycine cleavage system is composed of four proteins: P, T, L and H. It depends on (R)-lipoate as a cofactor.

In terms of biological role, the glycine cleavage system catalyzes the degradation of glycine. The H protein shuttles the methylamine group of glycine from the P protein to the T protein. In Shigella dysenteriae serotype 1 (strain Sd197), this protein is Glycine cleavage system H protein.